The following is a 293-amino-acid chain: Proximal tail tube connector protein (293 aa).

Positions 104-240 (TRLNTTGNKK…NANTTTNDKL (137 aa)) are disordered. Basic and acidic residues-rich tracts occupy residues 112-123 (KKNDTERNDNRD), 130-140 (ADGKSNTKTSD), and 162-173 (NFNRKIDSDQPD). The segment covering 174 to 184 (SRLNLTTNDGQ) has biased composition (polar residues). Over residues 196–238 (NNTNNKRNTTGTNNVTSSAESESTGSGTSDTVTTDNANTTTND) the composition is skewed to low complexity.

The protein belongs to the phi29likevirus proximal tail tube connector protein family.

It localises to the virion. Functionally, forms the proximal part of the tail tube. In Bacillus subtilis (Bacteriophage B103), this protein is Proximal tail tube connector protein (11).